The sequence spans 185 residues: Crossover junction endodeoxyribonuclease RuvC (185 aa).

Catalysis depends on residues Asp-7, Glu-66, and Asp-137. Mg(2+) is bound by residues Asp-7, Glu-66, and Asp-137.

It belongs to the RuvC family. In terms of assembly, homodimer which binds Holliday junction (HJ) DNA. The HJ becomes 2-fold symmetrical on binding to RuvC with unstacked arms; it has a different conformation from HJ DNA in complex with RuvA. In the full resolvosome a probable DNA-RuvA(4)-RuvB(12)-RuvC(2) complex forms which resolves the HJ. Requires Mg(2+) as cofactor.

It is found in the cytoplasm. It catalyses the reaction Endonucleolytic cleavage at a junction such as a reciprocal single-stranded crossover between two homologous DNA duplexes (Holliday junction).. Functionally, the RuvA-RuvB-RuvC complex processes Holliday junction (HJ) DNA during genetic recombination and DNA repair. Endonuclease that resolves HJ intermediates. Cleaves cruciform DNA by making single-stranded nicks across the HJ at symmetrical positions within the homologous arms, yielding a 5'-phosphate and a 3'-hydroxyl group; requires a central core of homology in the junction. The consensus cleavage sequence is 5'-(A/T)TT(C/G)-3'. Cleavage occurs on the 3'-side of the TT dinucleotide at the point of strand exchange. HJ branch migration catalyzed by RuvA-RuvB allows RuvC to scan DNA until it finds its consensus sequence, where it cleaves and resolves the cruciform DNA. In Anaeromyxobacter dehalogenans (strain 2CP-C), this protein is Crossover junction endodeoxyribonuclease RuvC.